The chain runs to 321 residues: tRNA-dihydrouridine synthase B (321 aa).

FMN-binding positions include 16–18 (PMA) and glutamine 70. Cysteine 100 acts as the Proton donor in catalysis. Residues lysine 139, 200 to 202 (NGD), and 224 to 225 (GR) contribute to the FMN site.

It belongs to the Dus family. DusB subfamily. It depends on FMN as a cofactor.

The enzyme catalyses a 5,6-dihydrouridine in tRNA + NAD(+) = a uridine in tRNA + NADH + H(+). It catalyses the reaction a 5,6-dihydrouridine in tRNA + NADP(+) = a uridine in tRNA + NADPH + H(+). Functionally, catalyzes the synthesis of 5,6-dihydrouridine (D), a modified base found in the D-loop of most tRNAs, via the reduction of the C5-C6 double bond in target uridines. The chain is tRNA-dihydrouridine synthase B from Klebsiella pneumoniae.